Here is a 265-residue protein sequence, read N- to C-terminus: Adenosylcobinamide-GDP ribazoletransferase (265 aa).

4 helical membrane-spanning segments follow: residues 51-71, 72-92, 121-140, and 203-223; these read LVGV…QLIF, PDSV…GAFH, IGTY…FVLW, and VASL…LFAF.

It belongs to the CobS family. Mg(2+) is required as a cofactor.

It is found in the cell inner membrane. The catalysed reaction is alpha-ribazole + adenosylcob(III)inamide-GDP = adenosylcob(III)alamin + GMP + H(+). It carries out the reaction alpha-ribazole 5'-phosphate + adenosylcob(III)inamide-GDP = adenosylcob(III)alamin 5'-phosphate + GMP + H(+). The protein operates within cofactor biosynthesis; adenosylcobalamin biosynthesis; adenosylcobalamin from cob(II)yrinate a,c-diamide: step 7/7. In terms of biological role, joins adenosylcobinamide-GDP and alpha-ribazole to generate adenosylcobalamin (Ado-cobalamin). Also synthesizes adenosylcobalamin 5'-phosphate from adenosylcobinamide-GDP and alpha-ribazole 5'-phosphate. This chain is Adenosylcobinamide-GDP ribazoletransferase, found in Vibrio parahaemolyticus serotype O3:K6 (strain RIMD 2210633).